A 238-amino-acid chain; its full sequence is Ankyrin repeat domain-containing protein 49 (238 aa).

Ser-48 carries the phosphoserine modification. ANK repeat units follow at residues Leu-77 to Glu-105, Asp-106 to Ala-135, Asp-139 to Ala-168, and Gly-172 to Asn-205.

The protein resides in the nucleus. In terms of biological role, may have a role in spermatogenesis where it promotes autophagy in response to serum starvation, via the NF-kappaB pathway. The chain is Ankyrin repeat domain-containing protein 49 (ANKRD49) from Bos taurus (Bovine).